Reading from the N-terminus, the 65-residue chain is Transcriptional regulatory protein SenS (65 aa).

A DNA-binding region (H-T-H motif) is located at residues 11 to 31 (RFRKRKTYGNQILPLELLIEK).

To B.natto SenN.

Functionally, regulates the expression of extracellular-protein genes of Bacillus subtilis. This chain is Transcriptional regulatory protein SenS (senS), found in Bacillus subtilis (strain 168).